A 715-amino-acid polypeptide reads, in one-letter code: Phosphoribosylformylglycinamidine synthase subunit PurL (715 aa).

Histidine 33 is a catalytic residue. Position 36 (tyrosine 36) interacts with ATP. Glutamate 77 contributes to the Mg(2+) binding site. Substrate is bound by residues 78-81 (SHNH) and arginine 100. The Proton acceptor role is filled by histidine 79. Residue aspartate 101 coordinates Mg(2+). Position 225 (glutamine 225) interacts with substrate. Aspartate 253 lines the Mg(2+) pocket. 297–299 (ESQ) serves as a coordination point for substrate. 2 residues coordinate ATP: asparagine 475 and glycine 512. Asparagine 513 is a Mg(2+) binding site. Serine 515 provides a ligand contact to substrate.

Belongs to the FGAMS family. Monomer. Part of the FGAM synthase complex composed of 1 PurL, 1 PurQ and 2 PurS subunits.

Its subcellular location is the cytoplasm. The enzyme catalyses N(2)-formyl-N(1)-(5-phospho-beta-D-ribosyl)glycinamide + L-glutamine + ATP + H2O = 2-formamido-N(1)-(5-O-phospho-beta-D-ribosyl)acetamidine + L-glutamate + ADP + phosphate + H(+). The protein operates within purine metabolism; IMP biosynthesis via de novo pathway; 5-amino-1-(5-phospho-D-ribosyl)imidazole from N(2)-formyl-N(1)-(5-phospho-D-ribosyl)glycinamide: step 1/2. Its function is as follows. Part of the phosphoribosylformylglycinamidine synthase complex involved in the purines biosynthetic pathway. Catalyzes the ATP-dependent conversion of formylglycinamide ribonucleotide (FGAR) and glutamine to yield formylglycinamidine ribonucleotide (FGAM) and glutamate. The FGAM synthase complex is composed of three subunits. PurQ produces an ammonia molecule by converting glutamine to glutamate. PurL transfers the ammonia molecule to FGAR to form FGAM in an ATP-dependent manner. PurS interacts with PurQ and PurL and is thought to assist in the transfer of the ammonia molecule from PurQ to PurL. This is Phosphoribosylformylglycinamidine synthase subunit PurL from Methanosarcina acetivorans (strain ATCC 35395 / DSM 2834 / JCM 12185 / C2A).